The primary structure comprises 291 residues: MELLCCEGDTVRRAQPDPALLLDDRVLHNLLTVEERYLPQCSYFKCVQKDIQPFMRRMVATWMLEVCEEQRCEEEVFPMAMNYLDRFLAVIPTRKCHLQLLGAVCMFLASKLKETIPLTAEKLCIYTDNSIKPQELLEWELVVLGKLKWNLAAVTPHDFIEHILRKLPLPKDKLLLIRKHAQTFIALCATDFNFAMYPPSMIATGSVGAAICGLQLDVGETSLSGDSLTEHLAKITSTDVDCLKACQEQIESVLVSSLRQTRQQTQQRNSSKSVDELDQASTPTDVQDINL.

The interval 261 to 291 is disordered; that stretch reads TRQQTQQRNSSKSVDELDQASTPTDVQDINL. Over residues 279–291 the composition is skewed to polar residues; the sequence is QASTPTDVQDINL. Residue T282 is modified to Phosphothreonine.

Belongs to the cyclin family. Cyclin D subfamily. As to quaternary structure, interacts with the cdk4 and cdk6 protein kinases to form a serine/threonine kinase holoenzyme complex. The cyclin subunit imparts substrate specificity to the complex. In terms of processing, phosphorylation at Thr-282 by MAP kinases is required for ubiquitination and degradation by the DCX(AMBRA1) complex. Ubiquitinated by the DCX(AMBRA1) complex during the transition from G1 to S cell phase, leading to its degradation: ubiquitination is dependent on Thr-282 phosphorylation. The DCX(AMBRA1) complex represents the major regulator of CCND2 stability during the G1/S transition.

Its subcellular location is the nucleus. It is found in the cytoplasm. The protein resides in the nucleus membrane. In terms of biological role, regulatory component of the cyclin D2-CDK4 (DC) complex that phosphorylates and inhibits members of the retinoblastoma (RB) protein family including RB1 and regulates the cell-cycle during G(1)/S transition. Phosphorylation of RB1 allows dissociation of the transcription factor E2F from the RB/E2F complex and the subsequent transcription of E2F target genes which are responsible for the progression through the G(1) phase. Hypophosphorylates RB1 in early G(1) phase. Cyclin D-CDK4 complexes are major integrators of various mitogenenic and antimitogenic signals. This chain is G1/S-specific cyclin-D2 (ccnd2), found in Xenopus laevis (African clawed frog).